The sequence spans 154 residues: MFKEFKIFIMRGNVVDLAVGIVIGAAFGAIVNSLVKDVLMPPIGLLLGNVDFGNLFIVLKEGAIGGPYESLLVAQTAGAVTINYGVFINALINFLILAMAIFFFVVRPLNQLAARQKSKEAVIPAQTDKKDCPYCATQIPLKASKCPYCTSELM.

Helical transmembrane passes span 14-34 and 86-106; these read VVDLAVGIVIGAAFGAIVNSL and VFINALINFLILAMAIFFFVV.

The protein belongs to the MscL family. Homopentamer.

It localises to the cell membrane. Functionally, channel that opens in response to stretch forces in the membrane lipid bilayer. May participate in the regulation of osmotic pressure changes within the cell. The protein is Large-conductance mechanosensitive channel of Dehalococcoides mccartyi (strain ATCC BAA-2100 / JCM 16839 / KCTC 5957 / BAV1).